The following is a 329-amino-acid chain: uncharacterized protein (329 aa).

Disordered regions lie at residues 16-41 and 183-229; these read RCGYPKAQEGTPAEGEQNSRKPSRIC and LENK…KFEP. The span at 213-229 shows a compositional bias: basic and acidic residues; that stretch reads SNDKANRGEKGEAKFEP.

Expressed in testis and epididymis. Expressed at lower levels in ovary.

Its function is as follows. Dispensable for normal development and fertility. This is an uncharacterized protein from Mus musculus (Mouse).